The sequence spans 665 residues: MQALSILPLKSGLLVGSRLEFELDCSCFVVSPKTTRKRLCFLEQACFGSSSSISSFIFVSSNRKVLFLCEPKRSLLGSSFGVGWATEQRELELGEEEVSTEDLSSANGGEKNNLRVDVRELAFSLRAAKTADDVDAVLKDKGELPLQVFCAMIKGFGKDKRLKPAVAVVDWLKRKKSESGGVIGPNLFIYNSLLGAMRGFGEAEKILKDMEEEGIVPNIVTYNTLMVIYMEEGEFLKALGILDLTKEKGFEPNPITYSTALLVYRRMEDGMGALEFFVELREKYAKREIGNDVGYDWEFEFVKLENFIGRICYQVMRRWLVKDDNWTTRVLKLLNAMDSAGVRPSREEHERLIWACTREEHYIVGKELYKRIRERFSEISLSVCNHLIWLMGKAKKWWAALEIYEDLLDEGPEPNNLSYELVVSHFNILLSAASKRGIWRWGVRLLNKMEDKGLKPQRRHWNAVLVACSKASETTAAIQIFKAMVDNGEKPTVISYGALLSALEKGKLYDEAFRVWNHMIKVGIEPNLYAYTTMASVLTGQQKFNLLDTLLKEMASKGIEPSVVTFNAVISGCARNGLSGVAYEWFHRMKSENVEPNEITYEMLIEALANDAKPRLAYELHVKAQNEGLKLSSKPYDAVVKSAETYGATIDLNLLGPRPDKKNRP.

Residues 1 to 68 (MQALSILPLK…VSSNRKVLFL (68 aa)) constitute a chloroplast transit peptide. PPR repeat units lie at residues 145–179 (PLQV…KSES), 181–217 (GVIG…GIVP), 218–252 (NIVT…GFEP), 253–283 (NPIT…LREK), 309–344 (GRIC…GVRP), 345–375 (SREE…IRER), 380–414 (SLSV…GPEP), 422–456 (VVSH…GLKP), 457–491 (QRRH…GEKP), 492–526 (TVIS…GIEP), 527–561 (NLYA…GIEP), 562–596 (SVVT…NVEP), and 597–631 (NEIT…GLKL).

The protein belongs to the PPR family. P subfamily. Interacts with HCF173.

Its subcellular location is the plastid. The protein localises to the chloroplast thylakoid membrane. It localises to the chloroplast stroma. Its function is as follows. Required for light-regulated photosystem II (PSII) biogenesis and grana thylakoids formation by binding to the 5' UTR of PSII subunit mRNAs (e.g. psbJ, psbN and psbA) in a light-dependent manner through a redox-based mechanism, and facilitating the association of HCF173 with target mRNAs, which encodes PSII reaction center proteins (e.g. J, N and D1), thus regulating its expression by modulating ribosome loading. The protein is Protein LOW PHOTOSYNTHETIC EFFICIENCY 1, chloroplastic of Arabidopsis thaliana (Mouse-ear cress).